Reading from the N-terminus, the 234-residue chain is Large ribosomal subunit protein uL1 (234 aa).

Belongs to the universal ribosomal protein uL1 family. In terms of assembly, part of the 50S ribosomal subunit.

Binds directly to 23S rRNA. The L1 stalk is quite mobile in the ribosome, and is involved in E site tRNA release. Functionally, protein L1 is also a translational repressor protein, it controls the translation of the L11 operon by binding to its mRNA. The protein is Large ribosomal subunit protein uL1 of Salmonella agona (strain SL483).